We begin with the raw amino-acid sequence, 167 residues long: Endoribonuclease YbeY (167 aa).

The Zn(2+) site is built by His131, His135, and His141.

The protein belongs to the endoribonuclease YbeY family. Zn(2+) is required as a cofactor.

Its subcellular location is the cytoplasm. Functionally, single strand-specific metallo-endoribonuclease involved in late-stage 70S ribosome quality control and in maturation of the 3' terminus of the 16S rRNA. The chain is Endoribonuclease YbeY from Rickettsia conorii (strain ATCC VR-613 / Malish 7).